Reading from the N-terminus, the 449-residue chain is Uridine-cytidine kinase C (449 aa).

ATP is bound at residue 58 to 65; the sequence is GPSGAGKT. Positions 235 to 401 constitute a CYTH domain; sequence NPIYILKSVK…QKSYIELYQD (167 aa).

This sequence belongs to the uridine kinase family.

The catalysed reaction is uridine + ATP = UMP + ADP + H(+). It catalyses the reaction cytidine + ATP = CMP + ADP + H(+). It participates in pyrimidine metabolism; CTP biosynthesis via salvage pathway; CTP from cytidine: step 1/3. The protein operates within pyrimidine metabolism; UMP biosynthesis via salvage pathway; UMP from uridine: step 1/1. Catalyzes the conversion of uridine into uridine monophosphate and cytidine into cytidine monophosphate in the pyrimidine salvage pathway. The sequence is that of Uridine-cytidine kinase C (udkC) from Dictyostelium discoideum (Social amoeba).